Consider the following 266-residue polypeptide: Movement protein (266 aa).

The segment covering 212 to 227 (KTKKGKKRKKEKKKRV) has biased composition (basic residues). The segment at 212-266 (KTKKGKKRKKEKKKRVVGNSVNNKKINNSGKKGLKVEEIEDNVSDDESIASSSTF) is disordered. Over residues 228-242 (VGNSVNNKKINNSGK) the composition is skewed to low complexity. Residues 249-259 (EIEDNVSDDES) show a composition bias toward acidic residues.

Belongs to the tobamovirus movement protein family.

It localises to the host cytoplasm. The protein resides in the host cytoskeleton. The protein localises to the host cell junction. Its subcellular location is the host plasmodesma. Its function is as follows. Transports viral genome to neighboring plant cells directly through plasmosdesmata, without any budding. The movement protein allows efficient cell to cell propagation, by bypassing the host cell wall barrier. Forms a ribonucleoprotein complex with viral RNA. Binds microtubules and modulates microtubule stability. Can bind double-stranded DNA. The protein is Movement protein (MP) of Capsicum annuum (Capsicum pepper).